The chain runs to 65 residues: MRTFLFLFAVLFFLTPAKNAFFDEKCNKLKGTCKNNCGKNEELIALCQKSLKCCRTIQPCGSIID.

Positions 1-20 (MRTFLFLFAVLFFLTPAKNA) are cleaved as a signal peptide. 3 cysteine pairs are disulfide-bonded: C26-C53, C33-C47, and C37-C54.

This sequence belongs to the beta-defensin family. As to quaternary structure, monomer. Interacts with CCR2 (via extracellular N-terminal region); this interaction may preferentially require specific tyrosine sulfation on CCR2.

It localises to the secreted. Its subcellular location is the membrane. Its function is as follows. Has antibacterial activity. Acts as a ligand for C-C chemokine receptor CCR2. This Gorilla gorilla gorilla (Western lowland gorilla) protein is Beta-defensin 106A (DEFB106A).